The primary structure comprises 320 residues: Methionine import ATP-binding protein MetN (320 aa).

One can recognise an ABC transporter domain in the interval 2-237 (IEIKNVSKYF…PSSEMKKLIG (236 aa)). 34–41 (GHSGAGKS) is an ATP binding site.

Belongs to the ABC transporter superfamily. Methionine importer (TC 3.A.1.24) family. The complex is composed of two ATP-binding proteins (MetN), two transmembrane proteins (MetI) and a solute-binding protein (MetQ).

The protein localises to the cell membrane. The catalysed reaction is L-methionine(out) + ATP + H2O = L-methionine(in) + ADP + phosphate + H(+). The enzyme catalyses D-methionine(out) + ATP + H2O = D-methionine(in) + ADP + phosphate + H(+). Part of the ABC transporter complex MetNIQ involved in methionine import. Responsible for energy coupling to the transport system. In Clostridium acetobutylicum (strain ATCC 824 / DSM 792 / JCM 1419 / IAM 19013 / LMG 5710 / NBRC 13948 / NRRL B-527 / VKM B-1787 / 2291 / W), this protein is Methionine import ATP-binding protein MetN.